The primary structure comprises 156 residues: Small ribosomal subunit protein uS7 (156 aa).

Belongs to the universal ribosomal protein uS7 family. In terms of assembly, part of the 30S ribosomal subunit. Contacts proteins S9 and S11.

Its function is as follows. One of the primary rRNA binding proteins, it binds directly to 16S rRNA where it nucleates assembly of the head domain of the 30S subunit. Is located at the subunit interface close to the decoding center, probably blocks exit of the E-site tRNA. This Frankia casuarinae (strain DSM 45818 / CECT 9043 / HFP020203 / CcI3) protein is Small ribosomal subunit protein uS7.